Reading from the N-terminus, the 195-residue chain is Probable nicotinate-nucleotide adenylyltransferase (195 aa).

This sequence belongs to the NadD family.

It carries out the reaction nicotinate beta-D-ribonucleotide + ATP + H(+) = deamido-NAD(+) + diphosphate. It functions in the pathway cofactor biosynthesis; NAD(+) biosynthesis; deamido-NAD(+) from nicotinate D-ribonucleotide: step 1/1. Catalyzes the reversible adenylation of nicotinate mononucleotide (NaMN) to nicotinic acid adenine dinucleotide (NaAD). This is Probable nicotinate-nucleotide adenylyltransferase from Chlorobaculum parvum (strain DSM 263 / NCIMB 8327) (Chlorobium vibrioforme subsp. thiosulfatophilum).